The primary structure comprises 269 residues: Ribosomal RNA small subunit methyltransferase A (269 aa).

Positions 18, 20, 45, 66, 91, and 112 each coordinate S-adenosyl-L-methionine.

Belongs to the class I-like SAM-binding methyltransferase superfamily. rRNA adenine N(6)-methyltransferase family. RsmA subfamily.

The protein resides in the cytoplasm. The enzyme catalyses adenosine(1518)/adenosine(1519) in 16S rRNA + 4 S-adenosyl-L-methionine = N(6)-dimethyladenosine(1518)/N(6)-dimethyladenosine(1519) in 16S rRNA + 4 S-adenosyl-L-homocysteine + 4 H(+). Its function is as follows. Specifically dimethylates two adjacent adenosines (A1518 and A1519) in the loop of a conserved hairpin near the 3'-end of 16S rRNA in the 30S particle. May play a critical role in biogenesis of 30S subunits. In Shewanella loihica (strain ATCC BAA-1088 / PV-4), this protein is Ribosomal RNA small subunit methyltransferase A.